A 242-amino-acid polypeptide reads, in one-letter code: uncharacterized protein (242 aa).

3 consecutive transmembrane segments (helical) span residues Tyr75 to Tyr95, Ile116 to Ile136, and Ile176 to Ile196. Residues Asp204 to Ser242 are disordered. Over residues Met210–Asn232 the composition is skewed to polar residues. A compositionally biased stretch (basic and acidic residues) spans Thr233–Ser242.

Its subcellular location is the cytoplasm. The protein resides in the membrane. This is an uncharacterized protein from Schizosaccharomyces pombe (strain 972 / ATCC 24843) (Fission yeast).